The primary structure comprises 725 residues: Dipeptidyl-peptidase 5 (725 aa).

A signal peptide spans 1-18 (MGALRWLSIAATASTALA). 6 N-linked (GlcNAc...) asparagine glycosylation sites follow: asparagine 75, asparagine 96, asparagine 153, asparagine 258, asparagine 383, and asparagine 453. Serine 563 functions as the Charge relay system in the catalytic mechanism. Asparagine 610 is a glycosylation site (N-linked (GlcNAc...) asparagine). Residues aspartate 646 and histidine 678 each act as charge relay system in the active site.

This sequence belongs to the peptidase S9C family.

It localises to the secreted. The sequence is that of Dipeptidyl-peptidase 5 from Aspergillus oryzae (strain ATCC 42149 / RIB 40) (Yellow koji mold).